The chain runs to 374 residues: Patatin-2-Kuras 1 (374 aa).

A signal peptide spans 1 to 11 (MILATTGSTCA). One can recognise a PNPLA domain in the interval 20-217 (LSIDGGGIKG…TVGDPALLSL (198 aa)). The GXGXXG motif lies at 24–29 (GGGIKG). A GXSXG motif is present at residues 63–67 (GTSTG). S65 serves as the catalytic Nucleophile. N103 carries an N-linked (GlcNAc...) asparagine glycan. D203 acts as the Proton acceptor in catalysis. The short motif at 203-205 (DGA) is the DGA/G element. Residues 309–372 (ENALTGTTTE…DRKKLRANKA (64 aa)) adopt a coiled-coil conformation.

This sequence belongs to the patatin family. In terms of tissue distribution, tuber.

The protein localises to the vacuole. In terms of biological role, probable lipolytic acyl hydrolase (LAH), an activity which is thought to be involved in the response of tubers to pathogens. In Solanum tuberosum (Potato), this protein is Patatin-2-Kuras 1 (pat2-k1).